A 420-amino-acid polypeptide reads, in one-letter code: MAMTMTQKILASHAGLDSVKSGELIKVKLDLVLGNDITTPVAINEFNKIGSNKVFHKEKVAIVPDHFTPNKDIKSAEQCKCVREFAKDKDIKNYFEIGQMGIEHALIPEKGLAVCGDVIIGADSHTCTYGALGAFSTGVGSTDMAAGMATGEAWFKVPEAIKFVLNGKLSPWVSGKDIILHIIGMIGVDGALYNSMEFTGEGVGELSMDDRFTIANMAIEAGAKNGIFPVDEKTIEYVKEHSNRSYTVYEADEDAEYVKTIEIDLSKIPPTVAFPHIPENTRTIDEVGEIKIDQVVIGSCTNGRIGDLRVAAKVLKGRKVNSNVRTIIFPATQSIYLQAMKEGLLEIFIESGAVVSTPTCGPCLGGHMGILAKGERAVATTNRNFTGRMGHVESEVYLASPAVAAASAVTGKISSPEEVV.

Residues Cys300, Cys360, and Cys363 each contribute to the [4Fe-4S] cluster site.

The protein belongs to the aconitase/IPM isomerase family. LeuC type 2 subfamily. As to quaternary structure, heterodimer of LeuC and LeuD. It depends on [4Fe-4S] cluster as a cofactor.

It carries out the reaction (2R,3S)-3-isopropylmalate = (2S)-2-isopropylmalate. The protein operates within amino-acid biosynthesis; L-leucine biosynthesis; L-leucine from 3-methyl-2-oxobutanoate: step 2/4. Functionally, catalyzes the isomerization between 2-isopropylmalate and 3-isopropylmalate, via the formation of 2-isopropylmaleate. The polypeptide is 3-isopropylmalate dehydratase large subunit (Clostridium kluyveri (strain ATCC 8527 / DSM 555 / NBRC 12016 / NCIMB 10680 / K1)).